A 484-amino-acid polypeptide reads, in one-letter code: GTPase Obg (484 aa).

An Obg domain is found at 7–164 (PRFVDRVVIH…RDLTLELKTV (158 aa)). The tract at residues 21 to 43 (SGGNGCASVHREKFKPLGGPDGG) is disordered. The OBG-type G domain maps to 165–345 (ADVGLVGFPS…LIFGLSQMIS (181 aa)). GTP contacts are provided by residues 171–178 (GFPSAGKS), 196–200 (FTTLV), 217–220 (DVPG), 297–300 (NKID), and 326–328 (STA). Mg(2+) is bound by residues S178 and T198. Residues 363-441 (PIPVDDSGFT…IGEMTFDWEP (79 aa)) form the OCT domain. The interval 439–484 (WEPQTPAGEPVAMSGRGTDPRLDSNKRVGAAERKAARSRRREHGDG) is disordered. The segment covering 456-473 (TDPRLDSNKRVGAAERKA) has biased composition (basic and acidic residues). Basic residues predominate over residues 474–484 (ARSRRREHGDG).

The protein belongs to the TRAFAC class OBG-HflX-like GTPase superfamily. OBG GTPase family. As to quaternary structure, monomer. It depends on Mg(2+) as a cofactor.

It localises to the cytoplasm. In terms of biological role, an essential GTPase which binds GTP, GDP and possibly (p)ppGpp with moderate affinity, with high nucleotide exchange rates and a fairly low GTP hydrolysis rate. Plays a role in control of the cell cycle, stress response, ribosome biogenesis and in those bacteria that undergo differentiation, in morphogenesis control. This Mycobacterium tuberculosis (strain CDC 1551 / Oshkosh) protein is GTPase Obg.